Consider the following 166-residue polypeptide: Large ribosomal subunit protein uL10 (166 aa).

It belongs to the universal ribosomal protein uL10 family. In terms of assembly, part of the ribosomal stalk of the 50S ribosomal subunit. The N-terminus interacts with L11 and the large rRNA to form the base of the stalk. The C-terminus forms an elongated spine to which L12 dimers bind in a sequential fashion forming a multimeric L10(L12)X complex.

In terms of biological role, forms part of the ribosomal stalk, playing a central role in the interaction of the ribosome with GTP-bound translation factors. The chain is Large ribosomal subunit protein uL10 from Pseudomonas syringae pv. syringae (strain B728a).